We begin with the raw amino-acid sequence, 210 residues long: Small ribosomal subunit protein uS3 (210 aa).

The region spanning 38-106 is the KH type-2 domain; it reads IRAWLKKRLA…EVQINIVEIR (69 aa).

It belongs to the universal ribosomal protein uS3 family. Part of the 30S ribosomal subunit. Forms a tight complex with proteins S10 and S14.

Its function is as follows. Binds the lower part of the 30S subunit head. Binds mRNA in the 70S ribosome, positioning it for translation. This is Small ribosomal subunit protein uS3 from Magnetococcus marinus (strain ATCC BAA-1437 / JCM 17883 / MC-1).